An 85-amino-acid chain; its full sequence is Small ribosomal subunit protein bS18 (85 aa).

Residues 1-12 (MAFAQAGGGGGQ) show a composition bias toward gly residues. Residues 1–22 (MAFAQAGGGGGQRRPFFRRRKT) form a disordered region.

Belongs to the bacterial ribosomal protein bS18 family. Part of the 30S ribosomal subunit. Forms a tight heterodimer with protein bS6.

In terms of biological role, binds as a heterodimer with protein bS6 to the central domain of the 16S rRNA, where it helps stabilize the platform of the 30S subunit. The sequence is that of Small ribosomal subunit protein bS18 from Azorhizobium caulinodans (strain ATCC 43989 / DSM 5975 / JCM 20966 / LMG 6465 / NBRC 14845 / NCIMB 13405 / ORS 571).